The chain runs to 292 residues: Elongation factor Ts (292 aa).

Residues 79–82 form an involved in Mg(2+) ion dislocation from EF-Tu region; the sequence is TDFV.

It belongs to the EF-Ts family.

The protein resides in the cytoplasm. In terms of biological role, associates with the EF-Tu.GDP complex and induces the exchange of GDP to GTP. It remains bound to the aminoacyl-tRNA.EF-Tu.GTP complex up to the GTP hydrolysis stage on the ribosome. The protein is Elongation factor Ts of Metamycoplasma arthritidis (strain 158L3-1) (Mycoplasma arthritidis).